The following is a 150-amino-acid chain: Phosphoribosyl-AMP cyclohydrolase (150 aa).

Aspartate 93 is a Mg(2+) binding site. Cysteine 94 serves as a coordination point for Zn(2+). Mg(2+)-binding residues include aspartate 95 and aspartate 97. Positions 112 and 119 each coordinate Zn(2+).

This sequence belongs to the PRA-CH family. In terms of assembly, homodimer. It depends on Mg(2+) as a cofactor. Zn(2+) is required as a cofactor.

It is found in the cytoplasm. The enzyme catalyses 1-(5-phospho-beta-D-ribosyl)-5'-AMP + H2O = 1-(5-phospho-beta-D-ribosyl)-5-[(5-phospho-beta-D-ribosylamino)methylideneamino]imidazole-4-carboxamide. The protein operates within amino-acid biosynthesis; L-histidine biosynthesis; L-histidine from 5-phospho-alpha-D-ribose 1-diphosphate: step 3/9. Its function is as follows. Catalyzes the hydrolysis of the adenine ring of phosphoribosyl-AMP. This Rhizobium etli (strain CIAT 652) protein is Phosphoribosyl-AMP cyclohydrolase.